The primary structure comprises 478 residues: MKVTLPDFRQAGVLVVGDVMLDRYWYGPTSRISPEAPVPVVKVDTIEERPGGAANVAMNIAALGAGSRLVGLTGVDDAARALNAKLGEVNVKCDFVSVPTHPTITKLRVLSRNQQLIRLDFEEGFEGIDPQPIIERIQQALPEIGALVLSDYAKGALAHVQTMIQTAKAAGVPVLIDPKGTDFSRYRGATLLTPNLSEFEAVAGRSKTEEELVERGMQLVADYELSALLITRSEQGMTLLQPGKAPLHLPTLAQEVYDVTGAGDTVIGVLAAALAAGNSLEEACFLANAAAGVVVGKLGTSTVTPIELENAIRGRADTGFGVMTEEQLKHAVELARQRGEKIVMTNGCFDILHAGHVSYLANARKLGDRLIVAVNSDASTKRLKGPTRPVNPLPQRMIVLGALEAVDWVVPFEEDTPQRLIASILPDILVKGGDYQPHEIAGSEEVWANGGEVKVLNFEDGCSTTNIINMIKASTSQS.

The tract at residues 1–318 (MKVTLPDFRQ…ENAIRGRADT (318 aa)) is ribokinase. 195–198 (NLSE) provides a ligand contact to ATP. The active site involves D264. A cytidylyltransferase region spans residues 344 to 478 (MTNGCFDILH…NMIKASTSQS (135 aa)).

This sequence in the N-terminal section; belongs to the carbohydrate kinase PfkB family. In the C-terminal section; belongs to the cytidylyltransferase family. Homodimer.

The catalysed reaction is D-glycero-beta-D-manno-heptose 7-phosphate + ATP = D-glycero-beta-D-manno-heptose 1,7-bisphosphate + ADP + H(+). It catalyses the reaction D-glycero-beta-D-manno-heptose 1-phosphate + ATP + H(+) = ADP-D-glycero-beta-D-manno-heptose + diphosphate. It functions in the pathway nucleotide-sugar biosynthesis; ADP-L-glycero-beta-D-manno-heptose biosynthesis; ADP-L-glycero-beta-D-manno-heptose from D-glycero-beta-D-manno-heptose 7-phosphate: step 1/4. Its pathway is nucleotide-sugar biosynthesis; ADP-L-glycero-beta-D-manno-heptose biosynthesis; ADP-L-glycero-beta-D-manno-heptose from D-glycero-beta-D-manno-heptose 7-phosphate: step 3/4. In terms of biological role, catalyzes the phosphorylation of D-glycero-D-manno-heptose 7-phosphate at the C-1 position to selectively form D-glycero-beta-D-manno-heptose-1,7-bisphosphate. Functionally, catalyzes the ADP transfer from ATP to D-glycero-beta-D-manno-heptose 1-phosphate, yielding ADP-D-glycero-beta-D-manno-heptose. This Pectobacterium atrosepticum (strain SCRI 1043 / ATCC BAA-672) (Erwinia carotovora subsp. atroseptica) protein is Bifunctional protein HldE.